The following is a 644-amino-acid chain: Putative aldehyde dehydrogenase-like protein YHR039C (644 aa).

Asn15 is a glycosylation site (N-linked (GlcNAc...) asparagine). Residue Glu354 is the Proton acceptor of the active site. The active-site Nucleophile is the Cys389. 2 N-linked (GlcNAc...) asparagine glycosylation sites follow: Asn565 and Asn627.

The protein belongs to the aldehyde dehydrogenase family. Post-translationally, N-glycosylated.

It is found in the endoplasmic reticulum. The protein is Putative aldehyde dehydrogenase-like protein YHR039C (MSC7) of Saccharomyces cerevisiae (strain ATCC 204508 / S288c) (Baker's yeast).